Reading from the N-terminus, the 252-residue chain is 5-oxoprolinase subunit A (252 aa).

This sequence belongs to the LamB/PxpA family. As to quaternary structure, forms a complex composed of PxpA, PxpB and PxpC.

It catalyses the reaction 5-oxo-L-proline + ATP + 2 H2O = L-glutamate + ADP + phosphate + H(+). In terms of biological role, catalyzes the cleavage of 5-oxoproline to form L-glutamate coupled to the hydrolysis of ATP to ADP and inorganic phosphate. The chain is 5-oxoprolinase subunit A from Mycolicibacterium paratuberculosis (strain ATCC BAA-968 / K-10) (Mycobacterium paratuberculosis).